A 1499-amino-acid polypeptide reads, in one-letter code: DNA-directed RNA polymerase subunit beta' (1499 aa).

Residues C67, C69, C82, and C85 each contribute to the Zn(2+) site. D497, D499, and D501 together coordinate Mg(2+). C865, C940, C947, and C950 together coordinate Zn(2+). The interval 1475–1499 is disordered; it reads YEPSQRAYQEDEYAKKEDGEIAIDD. The span at 1482 to 1493 shows a compositional bias: basic and acidic residues; sequence YQEDEYAKKEDG.

It belongs to the RNA polymerase beta' chain family. The RNAP catalytic core consists of 2 alpha, 1 beta, 1 beta' and 1 omega subunit. When a sigma factor is associated with the core the holoenzyme is formed, which can initiate transcription. Requires Mg(2+) as cofactor. The cofactor is Zn(2+).

The enzyme catalyses RNA(n) + a ribonucleoside 5'-triphosphate = RNA(n+1) + diphosphate. DNA-dependent RNA polymerase catalyzes the transcription of DNA into RNA using the four ribonucleoside triphosphates as substrates. The sequence is that of DNA-directed RNA polymerase subunit beta' from Chloroherpeton thalassium (strain ATCC 35110 / GB-78).